Here is a 629-residue protein sequence, read N- to C-terminus: Ribosomal protein S6 kinase 2 beta (629 aa).

The region spanning Phe-62 to Phe-321 is the Protein kinase 1 domain. ATP is bound by residues Leu-68–Val-76 and Lys-94. Asp-187 (proton acceptor) is an active-site residue. At Ser-221 the chain carries Phosphoserine. Positions Ser-322–Ala-391 constitute an AGC-kinase C-terminal domain. Thr-359 is subject to Phosphothreonine. Ser-363 is modified (phosphoserine). Phosphoserine; by autocatalysis is present on Ser-380. The region spanning Tyr-416 to Ser-629 is the Protein kinase 2 domain. ATP contacts are provided by residues Ile-422–Cys-430 and Lys-445. The active-site Proton acceptor is the Asp-533. Thr-571 is modified (phosphothreonine).

This sequence belongs to the protein kinase superfamily. AGC Ser/Thr protein kinase family. S6 kinase subfamily. It depends on Mg(2+) as a cofactor. In terms of processing, autophosphorylated on Ser-380, as part of the activation process.

The enzyme catalyses L-seryl-[protein] + ATP = O-phospho-L-seryl-[protein] + ADP + H(+). The catalysed reaction is L-threonyl-[protein] + ATP = O-phospho-L-threonyl-[protein] + ADP + H(+). With respect to regulation, activated by multiple phosphorylations on threonine and serine residues. Serine/threonine kinase that may play a role in mediating the growth-factor and stress induced activation of transcription. The chain is Ribosomal protein S6 kinase 2 beta from Xenopus laevis (African clawed frog).